The primary structure comprises 78 residues: uncharacterized protein (78 aa).

Positions 1-28 (MGGGNAQKSAMARAKNLEKAKAAGKGSQ) are disordered.

This is an uncharacterized protein from Arabidopsis thaliana (Mouse-ear cress).